Reading from the N-terminus, the 411-residue chain is Serine hydroxymethyltransferase (411 aa).

120–122 (GHL) lines the (6S)-5,6,7,8-tetrahydrofolate pocket. Lysine 225 is subject to N6-(pyridoxal phosphate)lysine. 350 to 352 (SPF) contributes to the (6S)-5,6,7,8-tetrahydrofolate binding site.

The protein belongs to the SHMT family. Homodimer. Requires pyridoxal 5'-phosphate as cofactor.

The protein localises to the cytoplasm. It catalyses the reaction (6R)-5,10-methylene-5,6,7,8-tetrahydrofolate + glycine + H2O = (6S)-5,6,7,8-tetrahydrofolate + L-serine. Its pathway is one-carbon metabolism; tetrahydrofolate interconversion. The protein operates within amino-acid biosynthesis; glycine biosynthesis; glycine from L-serine: step 1/1. Its function is as follows. Catalyzes the reversible interconversion of serine and glycine with tetrahydrofolate (THF) serving as the one-carbon carrier. This reaction serves as the major source of one-carbon groups required for the biosynthesis of purines, thymidylate, methionine, and other important biomolecules. Also exhibits THF-independent aldolase activity toward beta-hydroxyamino acids, producing glycine and aldehydes, via a retro-aldol mechanism. The chain is Serine hydroxymethyltransferase from Lactobacillus gasseri (strain ATCC 33323 / DSM 20243 / BCRC 14619 / CIP 102991 / JCM 1131 / KCTC 3163 / NCIMB 11718 / NCTC 13722 / AM63).